The chain runs to 77 residues: MALFRMLFLCAVLVLLTSKEGMSYEEPENDEGVACTGQYAESFCLNGGTCRYIQSIGEYYCICNGDYTGHRCEKKQV.

The signal sequence occupies residues 1–23; it reads MALFRMLFLCAVLVLLTSKEGMS. Residues 24 to 29 constitute a propeptide that is removed on maturation; it reads YEEPEN. The EGF-like domain maps to 31-73; it reads EGVACTGQYAESFCLNGGTCRYIQSIGEYYCICNGDYTGHRCE. 3 cysteine pairs are disulfide-bonded: C35–C50, C44–C61, and C63–C72.

It belongs to the EGF domain peptide family.

The protein resides in the secreted. Its subcellular location is the nematocyst. Functionally, has both toxic and EGF activity. Its EGF activity consists of rounding cells (morphological change) and inducing tyrosine phosphorylation of the EGFR in A431 cells, but with a lower potency that human EGF. The polypeptide is U-actitoxin-Avd12a (Anemonia viridis (Snakelocks anemone)).